The sequence spans 337 residues: Protein BIG GRAIN 1-like (337 aa).

Disordered stretches follow at residues 1-32 (MRDMEMRWAAPAPATRGRGRARRRAPDQPSFS), 120-163 (SAAG…RPAS), and 179-233 (KRPS…ARPS). The segment covering 137–146 (HEQPDVEKTA) has biased composition (basic and acidic residues). 3 stretches are compositionally biased toward low complexity: residues 150 to 163 (PGSASARACRRPAS), 195 to 209 (PACSTAPPSSSSSYA), and 219 to 230 (RTPPTTTTTARA).

This sequence belongs to the BIG GRAIN 1 (BG1) plant protein family.

Its subcellular location is the cell membrane. Its function is as follows. Involved in auxin transport. Regulator of the auxin signaling pathway. This is Protein BIG GRAIN 1-like from Oryza sativa subsp. indica (Rice).